The following is a 1183-amino-acid chain: MAGQVVQYGRHRKRRNYARISEVLELPNLIEIQTKSYEWFLREGLIEMFRDISPIEDFTGNLSLEFVDYRLGEPKYDLEESKNRDATYAAPLRVKVRLIIKETGEVKEQEVFMGDFPLMTDTGTFVINGAERVIVSQLVRSPSVYFNEKIDKNGRENYDATIIPNRGAWLEYETDAKDVVYVRIDRTRKLPLTVLLRALGFSSDQEIVDLLGDNEYLRNTLEKDGTENTEQALLEIYERLRPGEPPTVENAKSLLYSRFFDPKRYDLASVGRYKTNKKLHLKHRLFNQKLAEPIVNTETGEIVVEEGTVLDRRKIDEIMDVLESNANSEVFELHGSVIDEPVEIQSIKVYVPNDDEGRTTTVIGNAFPDSEVKCITPADIIASMSYFFNLLSGIGYTDDIDHLGNRRLRSVGELLQNQFRIGLSRMERVVRERMSIQDTESITPQQLINIRPVIASIKEFFGSSQLSQFMDQANPLAELTHKRRLSALGPGGLTRERAQMEVRDVHYSHYGRMCPIETPEGPNIGLINSLSSYARVNEFGFIETPYRKVDLDTHAITDQIDYLTADEEDSYVVAQANSKLDENGRFMDDEVVCRFRGNNTVMAKEKMDYMDVSPKQVVSAATACIPFLENDDSNRALMGANMQRQAVPLMNPEAPFVGTGMEHVAARDSGAAITAKHRGRVEHVESNEILVRRLVEENGVEHEGELDRYPLAKFKRSNSGTCYNQRPIVAVGDVVEYNEILADGPSMELGEMALGRNVVVGFMTWDGYNYEDAVIMSERLVKDDVYTSIHIEEYESEVRDTKLGPEEITRDIPNVSESALKNLDDRGIVYIGAEVKDGDILVGKVTPKGVTELTAEERLLHAIFGEKAREVRDTLLRVPHGAGGIVLDVKVFNREEGDDTLSPGVNQLVRVYIVQKRKIHVGDKMCGRHGNKGVISKIVPEEDMPYLPDGRPIDIMLNPLGVPSRMNIGQVLELHLGMAAKNLGIHVASPVFDGANDDDVWSTIEEAGMARDGKTVLYDGRTGEPFDNRISVGVMYMLKLAHMVDDKLHARSTGPYSLVTQQPLGGKAQFGGQRFGEMEVWALEAYGAAYTLQEILTYKSDDTVGRVKTYEAIVKGENISRPSVPESFRVLMKELQSLGLDVKVMDEQDNEIEMTDVDDDDVVERKVDLQQNDAPETQKEVTD.

Belongs to the RNA polymerase beta chain family. In terms of assembly, the RNAP catalytic core consists of 2 alpha, 1 beta, 1 beta' and 1 omega subunit. When a sigma factor is associated with the core the holoenzyme is formed, which can initiate transcription.

It carries out the reaction RNA(n) + a ribonucleoside 5'-triphosphate = RNA(n+1) + diphosphate. Its function is as follows. DNA-dependent RNA polymerase catalyzes the transcription of DNA into RNA using the four ribonucleoside triphosphates as substrates. This chain is DNA-directed RNA polymerase subunit beta, found in Staphylococcus aureus (strain COL).